A 1111-amino-acid polypeptide reads, in one-letter code: Serine/threonine-protein kinase Nek10 (1111 aa).

A compositionally biased stretch (basic and acidic residues) spans 1 to 16 (MPDQDTKAKSTEKTAD). Disordered stretches follow at residues 1 to 24 (MPDQ…TTTR) and 47 to 72 (AINF…HRAR). Residues 47–63 (AINFDSAQNNMTKSEPT) are compositionally biased toward polar residues. Residues 481–514 (YKDLVSQLNLLLEDELKQIAENIESINQKKAPLK) adopt a coiled-coil conformation. One can recognise a Protein kinase domain in the interval 519 to 791 (YAVLDHLGSG…MISDVMMKYL (273 aa)). ATP-binding positions include 525–533 (LGSGAFGCV) and K548. D655 acts as the Proton acceptor in catalysis.

This sequence belongs to the protein kinase superfamily. NEK Ser/Thr protein kinase family. NIMA subfamily. In terms of assembly, interacts with RAF1 and MAP2K1; the interaction is direct with RAF1 and required for ERK1/2-signaling pathway activation in response to UV irradiation. The cofactor is Mg(2+). As to expression, expressed in the mammary gland, lung, spleen, and kidney.

It catalyses the reaction L-seryl-[protein] + ATP = O-phospho-L-seryl-[protein] + ADP + H(+). The enzyme catalyses L-threonyl-[protein] + ATP = O-phospho-L-threonyl-[protein] + ADP + H(+). Its function is as follows. Plays a role in the cellular response to UV irradiation. Mediates G2/M cell cycle arrest, MEK autoactivation and ERK1/2-signaling pathway activation in response to UV irradiation. In ciliated cells, it is involved in the regulation of mucociliary transport. The protein is Serine/threonine-protein kinase Nek10 of Mus musculus (Mouse).